The primary structure comprises 254 residues: Type III pantothenate kinase (254 aa).

22–29 contributes to the ATP binding site; that stretch reads VLGNTHVR. Residues Y89 and 93 to 96 each bind substrate; that span reads GLDR. The active-site Proton acceptor is the D95. D115 contacts K(+). An ATP-binding site is contributed by T118. Position 173 (T173) interacts with substrate.

It belongs to the type III pantothenate kinase family. Homodimer. NH4(+) serves as cofactor. It depends on K(+) as a cofactor.

It is found in the cytoplasm. It catalyses the reaction (R)-pantothenate + ATP = (R)-4'-phosphopantothenate + ADP + H(+). It functions in the pathway cofactor biosynthesis; coenzyme A biosynthesis; CoA from (R)-pantothenate: step 1/5. Functionally, catalyzes the phosphorylation of pantothenate (Pan), the first step in CoA biosynthesis. The polypeptide is Type III pantothenate kinase (Synechococcus sp. (strain JA-2-3B'a(2-13)) (Cyanobacteria bacterium Yellowstone B-Prime)).